Reading from the N-terminus, the 359-residue chain is Peptide chain release factor 1 (359 aa).

Gln-233 is subject to N5-methylglutamine.

The protein belongs to the prokaryotic/mitochondrial release factor family. Methylated by PrmC. Methylation increases the termination efficiency of RF1.

It is found in the cytoplasm. In terms of biological role, peptide chain release factor 1 directs the termination of translation in response to the peptide chain termination codons UAG and UAA. The protein is Peptide chain release factor 1 of Clostridium acetobutylicum (strain ATCC 824 / DSM 792 / JCM 1419 / IAM 19013 / LMG 5710 / NBRC 13948 / NRRL B-527 / VKM B-1787 / 2291 / W).